A 553-amino-acid chain; its full sequence is Putative transport protein YidE (553 aa).

5 consecutive transmembrane segments (helical) span residues 4 to 24 (IALT…IGNV), 28 to 48 (GIGL…HFVS), 65 to 85 (FGLI…FFAS), 95 to 115 (LFAV…HKLF), and 158 to 178 (MSYA…MWML). RCK C-terminal domains lie at 191–276 (QQHE…VIGQ) and 279–361 (DTSL…VLGN). The next 6 helical transmembrane spans lie at 371 to 391 (MLPV…PVFV), 393 to 413 (GFPA…ALIL), 431 to 448 (NLAL…VVGL), 464 to 484 (LSWI…VGIL), 493 to 513 (YLTM…LAFA), and 533 to 553 (LVMF…WSIG).

It belongs to the AAE transporter (TC 2.A.81) family. YidE subfamily.

The protein localises to the cell membrane. This Shigella sonnei (strain Ss046) protein is Putative transport protein YidE.